Consider the following 250-residue polypeptide: Menaquinol:cytochrome c reductase cytochrome c subunit (250 aa).

3 helical membrane-spanning segments follow: residues 46-62 (WLVG…LTVA), 104-124 (VIGA…APFL), and 137-157 (VATG…WESV). Residues 178–250 (DTNAEGYKIA…LQKMANSSPA (73 aa)) form the Cytochrome c domain. Residues Cys-192, Cys-195, and His-196 each contribute to the heme c site. Positions 229–250 (MPGGIFKGTDEELQKMANSSPA) are disordered.

This sequence belongs to the cytochrome b family. As to quaternary structure, the main subunits of the menaquinol:cytochrome c complex are a Rieske-type iron-sulfur protein (QcrA), a cytochrome b (QcrB) and a cytochrome c (QcrC). The cofactor is heme c.

It is found in the cell membrane. Component of the menaquinol:cytochrome c reductase complex. This Geobacillus thermodenitrificans protein is Menaquinol:cytochrome c reductase cytochrome c subunit (qcrC).